The sequence spans 157 residues: Ribosome maturation factor RimP (157 aa).

It belongs to the RimP family.

It is found in the cytoplasm. In terms of biological role, required for maturation of 30S ribosomal subunits. The polypeptide is Ribosome maturation factor RimP (Enterococcus faecalis (strain ATCC 700802 / V583)).